The following is a 511-amino-acid chain: uncharacterized protein (511 aa).

3 helical membrane-spanning segments follow: residues 33–53 (IICMIIAYVFILPAGIVLAMA), 59–79 (IPVQIVYVILTLIGYIFAHIS), and 97–117 (VGRFFMWITFLIAIVGITTSI). Residues S147, S161, and S162 each carry the phosphoserine modification. The tract at residues 157 to 180 (REGNSSDEYLPPQSSRRDVSSEKP) is disordered. Helical transmembrane passes span 216-236 (LWLYVGFFESCTGIVLLAGIF), 249-269 (IKGAIFLWYGILSFGEYLGAF), 297-317 (MVESFLLFAYGVSNVWLEHLG), 332-352 (SLAFMLWWAGLCGILVESKVV), 412-432 (VLWGRLLAAAAIARICTYIML), 449-469 (IITSFCLICGGAMFMASSYDV), and 483-503 (IMNISVAFTCIVMGLEVMFLI).

The protein to yeast YCR061W.

It localises to the endoplasmic reticulum membrane. This is an uncharacterized protein from Schizosaccharomyces pombe (strain 972 / ATCC 24843) (Fission yeast).